A 376-amino-acid polypeptide reads, in one-letter code: Dual-specificity RNA methyltransferase RlmN (376 aa).

E95 serves as the catalytic Proton acceptor. Positions 101–339 constitute a Radical SAM core domain; sequence EKERATLCVS…CIVRRPRGDD (239 aa). A disulfide bridge links C108 with C344. Residues C115, C119, and C122 each coordinate [4Fe-4S] cluster. S-adenosyl-L-methionine is bound by residues 169 to 170, S201, 223 to 225, and N301; these read GE and SLH. The S-methylcysteine intermediate role is filled by C344.

This sequence belongs to the radical SAM superfamily. RlmN family. It depends on [4Fe-4S] cluster as a cofactor.

It is found in the cytoplasm. The enzyme catalyses adenosine(2503) in 23S rRNA + 2 reduced [2Fe-2S]-[ferredoxin] + 2 S-adenosyl-L-methionine = 2-methyladenosine(2503) in 23S rRNA + 5'-deoxyadenosine + L-methionine + 2 oxidized [2Fe-2S]-[ferredoxin] + S-adenosyl-L-homocysteine. It catalyses the reaction adenosine(37) in tRNA + 2 reduced [2Fe-2S]-[ferredoxin] + 2 S-adenosyl-L-methionine = 2-methyladenosine(37) in tRNA + 5'-deoxyadenosine + L-methionine + 2 oxidized [2Fe-2S]-[ferredoxin] + S-adenosyl-L-homocysteine. Its function is as follows. Specifically methylates position 2 of adenine 2503 in 23S rRNA and position 2 of adenine 37 in tRNAs. m2A2503 modification seems to play a crucial role in the proofreading step occurring at the peptidyl transferase center and thus would serve to optimize ribosomal fidelity. This chain is Dual-specificity RNA methyltransferase RlmN, found in Pseudoalteromonas translucida (strain TAC 125).